The chain runs to 244 residues: MAKVTMRQMLEAGVHFGHQTRYWNPKMGEYIFGARNKIHIVNLEKTLPMFNDALNFLGGIAAKKGTVLFVGTKRAAGDLVAQEAKRCGMPYVNHRWLGGMLTNFKTIKQSIKNLKDLEVQEQDGTFEKITKKEALMRSRQKAKLELSLGGIKDMRAMPDAIFIIDTGNEKIAIQEAKNLGIPVVGVVDTNNDPNGVDYVIPGNDDAVRAVSLYLSAAADAINEGKGSITTAVEGDEFVEEKAEA.

The protein belongs to the universal ribosomal protein uS2 family.

This Hydrogenovibrio crunogenus (strain DSM 25203 / XCL-2) (Thiomicrospira crunogena) protein is Small ribosomal subunit protein uS2.